The primary structure comprises 549 residues: MKSDTIKRGIQRAPHRSLLARCGLTDDDFEKPFIGIANSYTDIVPGHIHLRELAEAVKEGVNAAGGVAFEFNTMAICDGIAMNHDGMKYSLASREIVADTVESMAMAHALDGLVLLPTCDKIVPGMLMAAARLDIPAIVVTGGPMLPGEFKGRKVDLINVYEGVGTVSAGEMSEDELEELERCACPGPRSCAGLFTANTMACLTEALGMSLPGCATAHAVSSRKRQIARLSGKRIVEMVQENLKPTMIMSQEAFENAVMVDLALGGSTNTTLHIPAIAAEIDGLNINLDLFDELSRVIPHIASISPAGEHMMLDLDRAGGIPAVLKTLEDHINRECVTCTGRTVQENIENVKVGHRDVIRPLDSPVHSEGGLAILRGNLAPRGSVVKQGAVAEDMMVHEGPAKVFNSEDECMEAIFGGRIDEGDVIVIRYEGPKGGPGMREMLNPTSAIAGMGLERVALITDGRFSGGTRGPCVGHVSPEAMEDGPLAAVNDGDIIRIDIPSRKLEVDLSPREIEERLQSAVKPRRSVKGWLARYRKLAGSADTGAVLR.

Residue D78 coordinates Mg(2+). Position 119 (C119) interacts with [2Fe-2S] cluster. 2 residues coordinate Mg(2+): D120 and K121. K121 carries the post-translational modification N6-carboxylysine. Residue C191 participates in [2Fe-2S] cluster binding. Residue E441 participates in Mg(2+) binding. S466 serves as the catalytic Proton acceptor.

The protein belongs to the IlvD/Edd family. As to quaternary structure, homodimer. The cofactor is [2Fe-2S] cluster. Requires Mg(2+) as cofactor.

The catalysed reaction is (2R)-2,3-dihydroxy-3-methylbutanoate = 3-methyl-2-oxobutanoate + H2O. It carries out the reaction (2R,3R)-2,3-dihydroxy-3-methylpentanoate = (S)-3-methyl-2-oxopentanoate + H2O. Its pathway is amino-acid biosynthesis; L-isoleucine biosynthesis; L-isoleucine from 2-oxobutanoate: step 3/4. It participates in amino-acid biosynthesis; L-valine biosynthesis; L-valine from pyruvate: step 3/4. Functions in the biosynthesis of branched-chain amino acids. Catalyzes the dehydration of (2R,3R)-2,3-dihydroxy-3-methylpentanoate (2,3-dihydroxy-3-methylvalerate) into 2-oxo-3-methylpentanoate (2-oxo-3-methylvalerate) and of (2R)-2,3-dihydroxy-3-methylbutanoate (2,3-dihydroxyisovalerate) into 2-oxo-3-methylbutanoate (2-oxoisovalerate), the penultimate precursor to L-isoleucine and L-valine, respectively. The protein is Dihydroxy-acid dehydratase of Methanothermobacter thermautotrophicus (strain ATCC 29096 / DSM 1053 / JCM 10044 / NBRC 100330 / Delta H) (Methanobacterium thermoautotrophicum).